The primary structure comprises 269 residues: MKIGLIVSRVDEASIGIWSMLKGMVKFKEINTNEYSSDLALALVSDKDIVYVDEADEWARVNDIDLLLFLSRHEMKNPKPLITFHTPGNWTNDVELGGKPGQVAISEPRVLTNLFREAYRRIGELNGYSVTLEATHHGPFVDKPVVFVEIGSTSNEWRDPKAQEFLASLVFDLLNNTDKYINDGKDAAVSIGDLHYTTLVNHIINGEYDVGHMVPKYIKPTPTIIKMAVERNTVRPRIGIIHWKSLDAESRVMSEKELSNLGLTVIKRR.

Belongs to the DtdA deacylase family. As to quaternary structure, monomer. Zn(2+) is required as a cofactor.

It catalyses the reaction a D-aminoacyl-tRNA + H2O = a tRNA + a D-alpha-amino acid + H(+). It carries out the reaction glycyl-tRNA(Ala) + H2O = tRNA(Ala) + glycine + H(+). Its function is as follows. D-aminoacyl-tRNA deacylase with broad substrate specificity. By recycling D-aminoacyl-tRNA to D-amino acids and free tRNA molecules, this enzyme counteracts the toxicity associated with the formation of D-aminoacyl-tRNA entities in vivo. This is D-aminoacyl-tRNA deacylase from Caldivirga maquilingensis (strain ATCC 700844 / DSM 13496 / JCM 10307 / IC-167).